Here is a 132-residue protein sequence, read N- to C-terminus: Holo-[acyl-carrier-protein] synthase (132 aa).

Aspartate 8 and glutamate 64 together coordinate Mg(2+).

It belongs to the P-Pant transferase superfamily. AcpS family. Mg(2+) is required as a cofactor.

It localises to the cytoplasm. The enzyme catalyses apo-[ACP] + CoA = holo-[ACP] + adenosine 3',5'-bisphosphate + H(+). Functionally, transfers the 4'-phosphopantetheine moiety from coenzyme A to a Ser of acyl-carrier-protein. The chain is Holo-[acyl-carrier-protein] synthase from Shewanella woodyi (strain ATCC 51908 / MS32).